A 238-amino-acid polypeptide reads, in one-letter code: Ribonuclease 3 (238 aa).

The RNase III domain occupies 4–134; it reads PRQALLDAFG…LLGAIYLHHG (131 aa). Glutamate 44 contributes to the Mg(2+) binding site. The active site involves aspartate 48. 2 residues coordinate Mg(2+): aspartate 120 and glutamate 123. Residue glutamate 123 is part of the active site. The 69-residue stretch at 161–229 folds into the DRBM domain; the sequence is DWKTSLQELT…ASAAWKALDV (69 aa).

Belongs to the ribonuclease III family. In terms of assembly, homodimer. Mg(2+) serves as cofactor.

It is found in the cytoplasm. The catalysed reaction is Endonucleolytic cleavage to 5'-phosphomonoester.. Its function is as follows. Digests double-stranded RNA. Involved in the processing of primary rRNA transcript to yield the immediate precursors to the large and small rRNAs (23S and 16S). Processes some mRNAs, and tRNAs when they are encoded in the rRNA operon. Processes pre-crRNA and tracrRNA of type II CRISPR loci if present in the organism. This chain is Ribonuclease 3, found in Mycobacterium leprae (strain TN).